The chain runs to 43 residues: Protein PsbN (43 aa).

Residues 5 to 25 (TVLSIFISSLLLGITIYSIYI) form a helical membrane-spanning segment.

It belongs to the PsbN family.

It is found in the plastid. The protein resides in the chloroplast thylakoid membrane. In terms of biological role, may play a role in photosystem I and II biogenesis. This Gracilaria tenuistipitata var. liui (Red alga) protein is Protein PsbN.